Consider the following 295-residue polypeptide: Elongation factor Ts (295 aa).

An involved in Mg(2+) ion dislocation from EF-Tu region spans residues 79-82 (TDFV).

It belongs to the EF-Ts family.

It is found in the cytoplasm. In terms of biological role, associates with the EF-Tu.GDP complex and induces the exchange of GDP to GTP. It remains bound to the aminoacyl-tRNA.EF-Tu.GTP complex up to the GTP hydrolysis stage on the ribosome. This is Elongation factor Ts from Mycoplasma capricolum subsp. capricolum (strain California kid / ATCC 27343 / NCTC 10154).